Reading from the N-terminus, the 347-residue chain is NADH-ubiquinone oxidoreductase chain 2 (347 aa).

A run of 10 helical transmembrane segments spans residues 13-33, 60-80, 96-116, 123-143, 149-169, 178-198, 201-221, 247-267, 274-294, and 326-346; these read IFTG…WVGL, FLTQ…NSML, LMIM…FWVP, PLMS…SIMY, LNVN…SWGG, ILAY…PYNP, TILN…LLNL, TLLS…WVII, NSLI…YFYL, and LPTL…MLMI.

The protein belongs to the complex I subunit 2 family. In terms of assembly, core subunit of respiratory chain NADH dehydrogenase (Complex I) which is composed of 45 different subunits. Interacts with TMEM242.

It localises to the mitochondrion inner membrane. The enzyme catalyses a ubiquinone + NADH + 5 H(+)(in) = a ubiquinol + NAD(+) + 4 H(+)(out). Core subunit of the mitochondrial membrane respiratory chain NADH dehydrogenase (Complex I) which catalyzes electron transfer from NADH through the respiratory chain, using ubiquinone as an electron acceptor. Essential for the catalytic activity and assembly of complex I. The protein is NADH-ubiquinone oxidoreductase chain 2 of Pan troglodytes (Chimpanzee).